The chain runs to 255 residues: CDP-diacylglycerol pyrophosphatase (255 aa).

Residues Leu-5 to Phe-27 form a helical membrane-spanning segment.

Belongs to the Cdh family.

Its subcellular location is the cell inner membrane. It catalyses the reaction a CDP-1,2-diacyl-sn-glycerol + H2O = a 1,2-diacyl-sn-glycero-3-phosphate + CMP + 2 H(+). Its pathway is phospholipid metabolism; CDP-diacylglycerol degradation; phosphatidate from CDP-diacylglycerol: step 1/1. The polypeptide is CDP-diacylglycerol pyrophosphatase (Cronobacter sakazakii (strain ATCC BAA-894) (Enterobacter sakazakii)).